The following is a 496-amino-acid chain: MWQIIFLTFGWDLVLASAYSNFRKSVDSTGRRQYQVQNGPCSYTFLLPETDSCRSSSSPYMSNAVQRDAPLDYDDSVQRLQVLENILENNTQWLMKLENYIQDNMKKEMVEIQQNVVQNQTAVMIEIGTSLLNQTAAQTRKLTDVEAQVLNQTTRLELQLLQHSISTNKLEKQILDQTSEINKLQNKNSFLEQKVLDMEGKHSEQLQSMKEQKDELQVLVSKQSSVIDELEKKLVTATVNNSLLQKQQHDLMETVNSLLTMMSSPNSKSSVAIRKEEQTTFRDCAEIFKSGLTTSGIYTLTFPNSTEEIKAYCDMDVGGGGWTVIQHREDGSVDFQRTWKEYKEGFGSPLGEYWLGNEFVSQLTGQHRYVLKIQLKDWEGNEAHSLYDHFYLAGEESNYRIHLTGLTGTAGKISSISQPGSDFSTKDSDNDKCICKCSQMLSGGWWFDACGPSNLNGQYYPQKQNTNKFNGIKWYYWKGSGYSLKATTMMIRPADF.

Residues 1–18 (MWQIIFLTFGWDLVLASA) form the signal peptide. N-linked (GlcNAc...) asparagine glycosylation is found at asparagine 89, asparagine 119, asparagine 133, asparagine 151, asparagine 240, and asparagine 304. A coiled-coil region spans residues 159–256 (QLLQHSISTN…QQHDLMETVN (98 aa)). Residues 275-495 (KEEQTTFRDC…ATTMMIRPAD (221 aa)) enclose the Fibrinogen C-terminal domain. Residues cysteine 284 and cysteine 313 are joined by a disulfide bond. Positions 429, 431, 433, and 435 each coordinate Ca(2+). 2 cysteine pairs are disulfide-bonded: cysteine 433/cysteine 435 and cysteine 437/cysteine 450.

Interacts with TEK/TIE2, competing for the same binding site as ANGPT1. Interacts with ITGA5. Interacts with SVEP1/polydom. Interacts with THBD; this interaction significantly inhibits the generation of activated PC and TAFIa/CPB2 by the thrombin/thrombomodulin complex. As to expression, expressed in the ovary, uterus and placenta.

The protein localises to the secreted. Its function is as follows. Binds to TEK/TIE2, competing for the ANGPT1 binding site, and modulating ANGPT1 signaling. Can induce tyrosine phosphorylation of TEK/TIE2 in the absence of ANGPT1. In the absence of angiogenic inducers, such as VEGF, ANGPT2-mediated loosening of cell-matrix contacts may induce endothelial cell apoptosis with consequent vascular regression. In concert with VEGF, it may facilitate endothelial cell migration and proliferation, thus serving as a permissive angiogenic signal. Involved in the regulation of lymphangiogenesis. The sequence is that of Angiopoietin-2 (Angpt2) from Mus musculus (Mouse).